A 326-amino-acid polypeptide reads, in one-letter code: dTDP-4-dehydro-6-deoxy-D-allose reductase (326 aa).

Residues 15-21 and 129-132 each bind NADP(+); these read GALGFIG and MSSS. Residue tyrosine 160 is the Proton donor/acceptor of the active site. Residues lysine 164 and 187–190 contribute to the NADP(+) site; that span reads PGNV.

The protein belongs to the NAD(P)-dependent epimerase/dehydratase family.

The catalysed reaction is dTDP-6-deoxy-alpha-D-allose + NAD(+) = dTDP-4-dehydro-6-deoxy-alpha-D-allose + NADH + H(+). It carries out the reaction dTDP-6-deoxy-alpha-D-allose + NADP(+) = dTDP-4-dehydro-6-deoxy-alpha-D-allose + NADPH + H(+). In terms of biological role, catalyzes the stereospecific reduction of the C-4 keto group of dTDP-4-dehydro-6-deoxy-D-allose, leading to dTDP-6-deoxy-D-allose, an intermediate in the biosynthesis of the mycinose moiety of the chalcomycin antibiotic. This is dTDP-4-dehydro-6-deoxy-D-allose reductase (chmD) from Streptomyces bikiniensis.